The following is a 464-amino-acid chain: Cysteine--tRNA ligase (464 aa).

Cys29 provides a ligand contact to Zn(2+). The short motif at 31-41 is the 'HIGH' region element; it reads PTVYDFAHIGN. Zn(2+) contacts are provided by Cys224, His249, and Glu253. Positions 282–286 match the 'KMSKS' region motif; it reads KMSKS. Lys285 is an ATP binding site.

Belongs to the class-I aminoacyl-tRNA synthetase family. Monomer. Requires Zn(2+) as cofactor.

It is found in the cytoplasm. It catalyses the reaction tRNA(Cys) + L-cysteine + ATP = L-cysteinyl-tRNA(Cys) + AMP + diphosphate. This Afipia carboxidovorans (strain ATCC 49405 / DSM 1227 / KCTC 32145 / OM5) (Oligotropha carboxidovorans) protein is Cysteine--tRNA ligase.